Consider the following 121-residue polypeptide: UPF0295 protein ABC1323 (121 aa).

The next 2 helical transmembrane spans lie at 14–34 (TFAL…IFFK) and 41–61 (VIAM…YFFI).

It belongs to the UPF0295 family.

Its subcellular location is the cell membrane. This Shouchella clausii (strain KSM-K16) (Alkalihalobacillus clausii) protein is UPF0295 protein ABC1323.